The following is a 320-amino-acid chain: Cytochrome f (320 aa).

A signal peptide spans 1–35 (MEKRNTYDWVTRWVIASFSILTISYMITWTSISNA). The heme site is built by tyrosine 36, cysteine 56, cysteine 59, and histidine 60. The chain crosses the membrane as a helical span at residues 286-306 (IQGLLVFLASVVLAQIFLVLK).

The protein belongs to the cytochrome f family. As to quaternary structure, the 4 large subunits of the cytochrome b6-f complex are cytochrome b6, subunit IV (17 kDa polypeptide, petD), cytochrome f and the Rieske protein, while the 4 small subunits are PetG, PetL, PetM and PetN. The complex functions as a dimer. The cofactor is heme.

It localises to the plastid. The protein resides in the chloroplast thylakoid membrane. Its function is as follows. Component of the cytochrome b6-f complex, which mediates electron transfer between photosystem II (PSII) and photosystem I (PSI), cyclic electron flow around PSI, and state transitions. The chain is Cytochrome f from Welwitschia mirabilis (Tree tumbo).